The sequence spans 319 residues: uncharacterized protein (319 aa).

The tract at residues lysine 281 to aspartate 319 is disordered. Polar residues predominate over residues leucine 299–cysteine 308.

Its subcellular location is the cytoplasm. It is found in the nucleus. This is an uncharacterized protein from Saccharomyces cerevisiae (strain ATCC 204508 / S288c) (Baker's yeast).